The sequence spans 400 residues: Lysophospholipid transporter LplT (400 aa).

12 consecutive transmembrane segments (helical) span residues 19–39, 53–73, 91–111, 139–159, 164–184, 195–213, 227–247, 257–277, 281–301, 304–324, 352–372, and 373–393; these read VIVAQFLSAFGDNALLFATLA, VLQMVFVGAYILFAPFVGQIA, AGAAGICLGINPFVGYTLVGI, LMEASTIAAILLGSVAGGVLA, IAALVACALAYAGAVAANLFI, SWRLSAMTRSFFSACVVLW, LFWGAGVTLRFLLVLWVPVAL, YLNAMVAVGIVVGAGAAAKLV, TVSRCMPAGILIGVVVAIFSL, ALLPAYALLLLIGMLGGFFVV, NSAMLLMLGLYSLAVLVGVPA, and VAIGIGFGVLFALAIAALWIW.

The protein belongs to the major facilitator superfamily. LplT (TC 2.A.1.42) family.

It is found in the cell inner membrane. Functionally, catalyzes the facilitated diffusion of 2-acyl-glycero-3-phosphoethanolamine (2-acyl-GPE) into the cell. This is Lysophospholipid transporter LplT from Salmonella newport (strain SL254).